The sequence spans 108 residues: MDEIYPAVGNELTMEVWQQQWQTFEQEGLDTLEKRRQQALALDIECQAEQILGSPGKIICQRAKQDNSDIIVVGHRGRWGLSEILLGSVGNYVFHHAHCCVFVVPTPD.

This sequence belongs to the universal stress protein A family.

The chain is Universal stress protein Slr1101 from Synechocystis sp. (strain ATCC 27184 / PCC 6803 / Kazusa).